Reading from the N-terminus, the 471-residue chain is ATP synthase subunit beta (471 aa).

153-160 (GGAGVGKT) is a binding site for ATP.

The protein belongs to the ATPase alpha/beta chains family. F-type ATPases have 2 components, CF(1) - the catalytic core - and CF(0) - the membrane proton channel. CF(1) has five subunits: alpha(3), beta(3), gamma(1), delta(1), epsilon(1). CF(0) has four main subunits: a(1), b(1), b'(1) and c(9-12).

It is found in the cell membrane. The catalysed reaction is ATP + H2O + 4 H(+)(in) = ADP + phosphate + 5 H(+)(out). Functionally, produces ATP from ADP in the presence of a proton gradient across the membrane. The catalytic sites are hosted primarily by the beta subunits. This Roseiflexus sp. (strain RS-1) protein is ATP synthase subunit beta.